Here is a 58-residue protein sequence, read N- to C-terminus: Isocitrate lyase (58 aa).

This sequence belongs to the isocitrate lyase/PEP mutase superfamily. Isocitrate lyase family. Homotetramer. Mg(2+) is required as a cofactor.

Its subcellular location is the glyoxysome. The catalysed reaction is D-threo-isocitrate = glyoxylate + succinate. Its pathway is carbohydrate metabolism; glyoxylate cycle; (S)-malate from isocitrate: step 1/2. In terms of biological role, involved in storage lipid mobilization during the growth of higher plant seedling. This Helianthus annuus (Common sunflower) protein is Isocitrate lyase.